A 181-amino-acid polypeptide reads, in one-letter code: Adenine phosphoribosyltransferase (181 aa).

This sequence belongs to the purine/pyrimidine phosphoribosyltransferase family. Homodimer.

Its subcellular location is the cytoplasm. The catalysed reaction is AMP + diphosphate = 5-phospho-alpha-D-ribose 1-diphosphate + adenine. It participates in purine metabolism; AMP biosynthesis via salvage pathway; AMP from adenine: step 1/1. Its function is as follows. Catalyzes a salvage reaction resulting in the formation of AMP, that is energically less costly than de novo synthesis. In Chromohalobacter salexigens (strain ATCC BAA-138 / DSM 3043 / CIP 106854 / NCIMB 13768 / 1H11), this protein is Adenine phosphoribosyltransferase.